The primary structure comprises 244 residues: ATP synthase subunit a, chloroplastic (244 aa).

Transmembrane regions (helical) follow at residues 35–55 (QVLITSWVVIAILLGSAVIAV), 92–112 (VPFIGTMFLFIFVSNWSGALL), 131–151 (INTTVALALLTSVAYFYAGLS), 196–216 (LVVVVLVSLVPSVVPIPVMFL), and 217–237 (GLFTSGIQALIFATLAAAYIG).

Belongs to the ATPase A chain family. F-type ATPases have 2 components, CF(1) - the catalytic core - and CF(0) - the membrane proton channel. CF(1) has five subunits: alpha(3), beta(3), gamma(1), delta(1), epsilon(1). CF(0) has four main subunits: a, b, b' and c.

It localises to the plastid. Its subcellular location is the chloroplast thylakoid membrane. Key component of the proton channel; it plays a direct role in the translocation of protons across the membrane. The protein is ATP synthase subunit a, chloroplastic of Gossypium hirsutum (Upland cotton).